Consider the following 459-residue polypeptide: Ribulose bisphosphate carboxylase/oxygenase activase, chloroplastic (459 aa).

ATP is bound at residue 164–171 (GGKGQGKS).

This sequence belongs to the RuBisCO activase family.

The protein resides in the plastid. Its subcellular location is the chloroplast stroma. Functionally, activation of RuBisCO (ribulose-1,5-bisphosphate carboxylase/oxygenase; EC 4.1.1.39) involves the ATP-dependent carboxylation of the epsilon-amino group of lysine leading to a carbamate structure. In Solanum pennellii (Tomato), this protein is Ribulose bisphosphate carboxylase/oxygenase activase, chloroplastic.